Consider the following 367-residue polypeptide: Serine/threonine-protein kinase Sgk2 (367 aa).

The tract at residues 1–28 (MASSPVGVPSPQPSRANGNINLGPSANP) is disordered. Position 10 is a phosphoserine (S10). Residues 15–28 (RANGNINLGPSANP) show a composition bias toward polar residues. The Protein kinase domain occupies 35 to 292 (FDFLKVIGKG…FLDIKNHMFF (258 aa)). Residues 41-49 (IGKGNYGKV) and K64 each bind ATP. Positions 68 to 78 (KKSILKNKEQN) match the Nuclear localization signal motif. D159 (proton acceptor) is an active-site residue. Phosphothreonine; by PDPK1 is present on T193. The 75-residue stretch at 293 to 367 (SPINWDDLYH…AQDDDDILDS (75 aa)) folds into the AGC-kinase C-terminal domain. A phosphoserine mark is found at S334 and S356. At Y357 the chain carries Phosphotyrosine.

Belongs to the protein kinase superfamily. AGC Ser/Thr protein kinase family. In terms of processing, activated by phosphorylation on Ser-356 by an unknown kinase (may be mTORC2 but not confirmed), transforming it into a substrate for PDPK1 which then phosphorylates it on Thr-193.

It localises to the cytoplasm. Its subcellular location is the nucleus. It catalyses the reaction L-seryl-[protein] + ATP = O-phospho-L-seryl-[protein] + ADP + H(+). The catalysed reaction is L-threonyl-[protein] + ATP = O-phospho-L-threonyl-[protein] + ADP + H(+). With respect to regulation, two specific sites, one in the kinase domain (Thr-193) and the other in the C-terminal regulatory region (Ser-356), need to be phosphorylated for its full activation. Serine/threonine-protein kinase which is involved in the regulation of a wide variety of ion channels, membrane transporters, cell growth, survival and proliferation. Up-regulates Na(+) channels: SCNN1A/ENAC, K(+) channels: KCNA3/Kv1.3, KCNE1 and KCNQ1, amino acid transporter: SLC6A19, glutamate transporter: SLC1A6/EAAT4, glutamate receptors: GRIA1/GLUR1 and GRIK2/GLUR6, Na(+)/H(+) exchanger: SLC9A3/NHE3, and the Na(+)/K(+) ATPase. In Mus musculus (Mouse), this protein is Serine/threonine-protein kinase Sgk2 (Sgk2).